The chain runs to 541 residues: Tyrosine-protein kinase Yes (541 aa).

A compositionally biased stretch (basic and acidic residues) spans 1–10 (MGCIKSKENK). Positions 1–29 (MGCIKSKENKSPAIKYTPENPTEPVNTSA) are disordered. Gly2 carries N-myristoyl glycine lipidation. Cys3 is lipidated: S-palmitoyl cysteine; in membrane form. Positions 19–29 (ENPTEPVNTSA) are enriched in polar residues. Tyr32 carries the phosphotyrosine modification. The SH3 domain maps to 89-150 (GGVTIFVALY…PSNYVAPADS (62 aa)). The SH2 domain occupies 156–253 (WYFGKMGRKD…GLCHKLTTVC (98 aa)). The Protein kinase domain occupies 275-528 (LRLEVKLGQG…YIQSFLEDYF (254 aa)). ATP-binding positions include 281-289 (LGQGCFGEV) and Lys303. A phosphotyrosine mark is found at Tyr334 and Tyr343. Asp394 functions as the Proton acceptor in the catalytic mechanism. A Phosphotyrosine; by autocatalysis modification is found at Tyr424. Tyr535 carries the phosphotyrosine modification.

In terms of assembly, interacts with YAP1 and CSF1R. Interacts with FASLG. Interacts with CTNND1; this interaction allows YES1-mediated activation of FYN and FER and subsequent phosphorylation of CTNND1. Interacts with IL6ST/gp130. Interacts with SCRIB, when YES1 is in a closed conformation; the interaction facilitates YES1 autophosphorylation. Post-translationally, phosphorylated. Phosphorylation by CSK on the C-terminal tail maintains the enzyme in an inactive state. Autophosphorylation at Tyr-424 maintains enzyme activity by blocking CSK-mediated inhibition. Palmitoylation at Cys-3 promotes membrane localization.

It is found in the cell membrane. It localises to the cytoplasm. Its subcellular location is the cytoskeleton. The protein resides in the microtubule organizing center. The protein localises to the centrosome. It is found in the cytosol. It localises to the cell junction. It catalyses the reaction L-tyrosyl-[protein] + ATP = O-phospho-L-tyrosyl-[protein] + ADP + H(+). Non-receptor protein tyrosine kinase that is involved in the regulation of cell growth and survival, apoptosis, cell-cell adhesion, cytoskeleton remodeling, and differentiation. Stimulation by receptor tyrosine kinases (RTKs) including EGFR, PDGFR, CSF1R and FGFR leads to recruitment of YES1 to the phosphorylated receptor, and activation and phosphorylation of downstream substrates. Upon EGFR activation, promotes the phosphorylation of PARD3 to favor epithelial tight junction assembly. Participates in the phosphorylation of specific junctional components such as CTNND1 by stimulating the FYN and FER tyrosine kinases at cell-cell contacts. Upon T-cell stimulation by CXCL12, phosphorylates collapsin response mediator protein 2/DPYSL2 and induces T-cell migration. Participates in CD95L/FASLG signaling pathway and mediates AKT-mediated cell migration. Plays a role in cell cycle progression by phosphorylating the cyclin dependent kinase 4/CDK4 thus regulating the G1 phase. Also involved in G2/M progression and cytokinesis. Catalyzes phosphorylation of organic cation transporter OCT2 which induces its transport activity. The sequence is that of Tyrosine-protein kinase Yes (Yes1) from Rattus norvegicus (Rat).